We begin with the raw amino-acid sequence, 175 residues long: Secretion monitor (175 aa).

Residues 1–38 (MSIINFWRQFGRRYFWSHLLLGMVAAGIGMPSLVSAHA) form the signal peptide.

The protein belongs to the SecM family.

The protein localises to the cytoplasm. It is found in the cytosol. It localises to the periplasm. Its function is as follows. Regulates secA expression by translational coupling of the secM secA operon. Translational pausing at a specific Pro residue 5 residues before the end of the protein may allow disruption of a mRNA repressor helix that normally suppresses secA translation initiation. This is Secretion monitor from Proteus mirabilis (strain HI4320).